A 232-amino-acid polypeptide reads, in one-letter code: Phosphatidylserine decarboxylase proenzyme (232 aa).

Ser-190 functions as the Schiff-base intermediate with substrate; via pyruvic acid in the catalytic mechanism. At Ser-190 the chain carries Pyruvic acid (Ser); by autocatalysis.

This sequence belongs to the phosphatidylserine decarboxylase family. PSD-A subfamily. As to quaternary structure, heterodimer of a large membrane-associated beta subunit and a small pyruvoyl-containing alpha subunit. Pyruvate serves as cofactor. In terms of processing, is synthesized initially as an inactive proenzyme. Formation of the active enzyme involves a self-maturation process in which the active site pyruvoyl group is generated from an internal serine residue via an autocatalytic post-translational modification. Two non-identical subunits are generated from the proenzyme in this reaction, and the pyruvate is formed at the N-terminus of the alpha chain, which is derived from the carboxyl end of the proenzyme. The post-translation cleavage follows an unusual pathway, termed non-hydrolytic serinolysis, in which the side chain hydroxyl group of the serine supplies its oxygen atom to form the C-terminus of the beta chain, while the remainder of the serine residue undergoes an oxidative deamination to produce ammonia and the pyruvoyl prosthetic group on the alpha chain.

The protein localises to the cell membrane. The catalysed reaction is a 1,2-diacyl-sn-glycero-3-phospho-L-serine + H(+) = a 1,2-diacyl-sn-glycero-3-phosphoethanolamine + CO2. It participates in phospholipid metabolism; phosphatidylethanolamine biosynthesis; phosphatidylethanolamine from CDP-diacylglycerol: step 2/2. In terms of biological role, catalyzes the formation of phosphatidylethanolamine (PtdEtn) from phosphatidylserine (PtdSer). In Beijerinckia indica subsp. indica (strain ATCC 9039 / DSM 1715 / NCIMB 8712), this protein is Phosphatidylserine decarboxylase proenzyme.